The primary structure comprises 251 residues: Eukaryotic translation initiation factor 4E-3 (251 aa).

Residues aspartate 200–proline 251 are disordered. The span at alanine 230–proline 251 shows a compositional bias: polar residues.

The protein belongs to the eukaryotic initiation factor 4E family. EIF4F is a multi-subunit complex, the composition of which varies with external and internal environmental conditions. It is composed of at least eIF4A, eIF4E and eIF4G. eIF4E is also known to interact with other partners. Interacts with mxt. Component of the pid-1 variant of the PETISCO complex (also called the pid-3, erh-2, tofu-6, and ife-3 small RNA complex) containing at least pid-1, tofu-6, ife-3, pid-3, and erh-2, which is required for the biogenesis of a class of 21 nucleotide PIWI-interacting RNAs (piRNAs) that possess a uracil residue at the 5'-end (also called 21U-RNAs). Component of the tost-1 variant of the PETISCO complex (also called the pid-3, erh-2, tofu-6, and ife-3 small RNA complex) containing at least tost-1, tofu-6, ife-3, pid-3, and erh-2, which plays an essential role in embryogenesis. Within the pid-1 and tost-1 variants of the PETISCO complexes interacts with tofu-6 (via C-terminus). In contrast to the pid-1 variant of the PETISCO complex, the tost-1 variant of the PETISCO complex plays a minor role in the biogenesis of 21U-RNAs. Highly expressed in the germline (at protein level).

The protein resides in the cytoplasmic granule. The protein localises to the cytoplasm. It is found in the perinuclear region. In terms of biological role, recognizes and binds the 7-methylguanosine-containing mRNA cap during an early step in the initiation of protein synthesis and facilitates ribosome binding by inducing the unwinding of the mRNAs secondary structures. All 5 eIF4E proteins bind monomethyl cap structures. Only ife-1, ife-2 and ife-5 bind trimethyl cap structures which result from trans-splicing. Translation of trimethyl cap structure mRNAs may be regulated by intracellular redox state; disulfide bonds change the width and depth of the cap-binding cavity determining selectivity to mRNA caps. Ife-3 is essential for viability. Component of the pid-1 and tost-1 variants of the PETISCO complexes, which have roles in the biogenesis of a class of 21 nucleotide PIWI-interacting RNAs (piRNAs) that possess a uracil residue at the 5'-end (also called 21U-RNAs) and embryogenesis, respectively. Within the pid-1 variant of the PETISCO complex binds to capped 21U-RNA precursor molecules, possibly playing a role in the processing of the 5' end of the molecules to promote binding of other complex components such as pid-3. However, it is not essential for the biogenesis of 21U-RNAs by itself. Within the tost-1 variant of the PETISCO complex binds to splice leader SL1 RNA fragments to possibly play a role in their processing. This is Eukaryotic translation initiation factor 4E-3 from Caenorhabditis elegans.